The sequence spans 254 residues: Mantle protein (254 aa).

Positions 1 to 16 (MLAVLLFAALVATAYS) are cleaved as a signal peptide.

Prismatic layer of shell (at protein level). Expressed primarily in the mantle with highest level in the outer epithelium of the mantle edge and lower level in the mantle pallium.

The protein localises to the secreted. This Margaritifera margaritifera (Freshwater pearl mussel) protein is Mantle protein.